A 329-amino-acid chain; its full sequence is MELHILEHRVRVLSVARPGLWLYTHPLIKLLFLPRRSRCKFFSLTETPEDYTLMVDEEGFKELPPSEFLQVAEATWLVLNVSSHSGAAVQAAGVTKIARSVIAPLAEHHVSVLMLSTYQTDFILVREQDLSVVIHTLAQEFDIYREVGGEPVPVTRDDSSNGFPRTQHGPSPTVHPIQSPQNRFCVLTLDPETLPAIATTLIDVLFYSHSTPKEAASSSPEPSSITFFAFSLIEGYISIVMDAETQKKFPSDLLLTSSSGELWRMVRIGGQPLGFDECGIVAQIAGPLAAADISAYYISTFNFDHALVPEDGIGSVIEVLQRRQEGLAS.

Phosphoserine; by PKB/AKT1 is present on S14. ACT domains follow at residues 72-138 and 260-321; these read AEAT…HTLA and GELW…EVLQ. Residues 111–112, G274, 280–281, and 300–304 each bind L-arginine; these read SV, IV, and TFNFD.

Belongs to the GATS family. As to quaternary structure, forms homodimers and heterodimers with CASTOR2. Interacts with the GATOR2 complex which is composed of MIOS, SEC13, SEH1L, WDR24 and WDR59; the interaction is negatively regulated by arginine. Interacts with TM4SF5; the interaction is positively regulated by leucine and is negatively regulated by arginine. Post-translationally, phosphorylation at Ser-14 by AKT1, promoting the interaction between CASTOR1 and RNF167. In terms of processing, ubiquitinated by RNF167 via 'Lys-29'-polyubiquitination, leading to its degradation, releasing the GATOR2 complex. Ubiquitination by RNF167 is promoted by phosphorylation at Ser-14 by AKT1. In terms of tissue distribution, widely expressed.

It localises to the cytoplasm. The protein resides in the cytosol. In terms of biological role, functions as an intracellular arginine sensor within the amino acid-sensing branch of the TORC1 signaling pathway. As a homodimer or a heterodimer with CASTOR2, binds and inhibits the GATOR subcomplex GATOR2 and thereby mTORC1. Binding of arginine to CASTOR1 allosterically disrupts the interaction of CASTOR1-containing dimers with GATOR2 which can in turn activate mTORC1 and the TORC1 signaling pathway. This is Cytosolic arginine sensor for mTORC1 subunit 1 from Homo sapiens (Human).